A 293-amino-acid chain; its full sequence is Nucleotide-binding protein HRM2_27900 (293 aa).

Gly-11–Ser-18 provides a ligand contact to ATP. Asp-62 to Ala-65 is a binding site for GTP.

This sequence belongs to the RapZ-like family.

Displays ATPase and GTPase activities. The polypeptide is Nucleotide-binding protein HRM2_27900 (Desulforapulum autotrophicum (strain ATCC 43914 / DSM 3382 / VKM B-1955 / HRM2) (Desulfobacterium autotrophicum)).